A 155-amino-acid polypeptide reads, in one-letter code: Reticulon-like protein B23 (155 aa).

The Reticulon domain maps to 1-155; that stretch reads MGEMGKAIGL…LNRRNGEILD (155 aa). The next 2 helical transmembrane spans lie at 30–50 and 117–137; these read SLIS…GLLF and IISG…SMLF.

Its subcellular location is the endoplasmic reticulum membrane. The polypeptide is Reticulon-like protein B23 (RTNLB23) (Arabidopsis thaliana (Mouse-ear cress)).